The primary structure comprises 413 residues: Protein trichome birefringence-like 9 (413 aa).

Residues 22–42 (LFVSLFLLSLLIFSTVVVDVM) traverse the membrane as a helical; Signal-anchor for type II membrane protein segment. The short motif at 141 to 143 (GDS) is the GDS motif element. The short motif at 384–398 (DCSHWCLPGVPDTWN) is the DCXHWCLPGXXDXWN motif element.

This sequence belongs to the PC-esterase family. TBL subfamily.

The protein resides in the membrane. Its function is as follows. May act as a bridging protein that binds pectin and other cell wall polysaccharides. Probably involved in maintaining esterification of pectins. May be involved in the specific O-acetylation of cell wall polymers. The chain is Protein trichome birefringence-like 9 (TBL9) from Arabidopsis thaliana (Mouse-ear cress).